A 118-amino-acid polypeptide reads, in one-letter code: Large ribosomal subunit protein bL20 (118 aa).

It belongs to the bacterial ribosomal protein bL20 family.

Functionally, binds directly to 23S ribosomal RNA and is necessary for the in vitro assembly process of the 50S ribosomal subunit. It is not involved in the protein synthesizing functions of that subunit. This chain is Large ribosomal subunit protein bL20, found in Shigella flexneri serotype 5b (strain 8401).